A 469-amino-acid chain; its full sequence is Glutamate--tRNA ligase (469 aa).

The short motif at 9 to 19 (PSPTGFLHVGG) is the 'HIGH' region element. Positions 98, 100, 125, and 127 each coordinate Zn(2+). The short motif at 236 to 240 (KLSKR) is the 'KMSKS' region element. Residue Lys239 participates in ATP binding.

This sequence belongs to the class-I aminoacyl-tRNA synthetase family. Glutamate--tRNA ligase type 1 subfamily. As to quaternary structure, monomer. It depends on Zn(2+) as a cofactor.

The protein resides in the cytoplasm. The catalysed reaction is tRNA(Glu) + L-glutamate + ATP = L-glutamyl-tRNA(Glu) + AMP + diphosphate. Its function is as follows. Catalyzes the attachment of glutamate to tRNA(Glu) in a two-step reaction: glutamate is first activated by ATP to form Glu-AMP and then transferred to the acceptor end of tRNA(Glu). The protein is Glutamate--tRNA ligase of Shewanella loihica (strain ATCC BAA-1088 / PV-4).